The primary structure comprises 295 residues: MRWLITGAAGMLGRELVRRLAENEEDVAALGHDHLDVTRPSAVRAALAEHRPGIVVNCAAYTAVDDAETDEAAAALLNAEAPRLLAEGLRPHRRHGLVHLSTDYVFPGDARTPYAEDHPTAPRSAYGRTKRDGEQAVLTALPTATVLRTAWLYGRTGRSFVRTMIEREARGGAIDVVADQRGQPTWTGDLADRIIAVGRHPGVHGILHATNAGSATWYDLAQEVFRLLDADPGRVRPTTGAAFRRPAPRPAYSVLGHDRWRGTGLAPLRDWRSALREAFPDILAAEHPPTRRGAA.

Residues 10-12, 36-37, 60-62, tyrosine 126, and lysine 130 contribute to the NADH site; these read GML, DV, and AYT. NADPH contacts are provided by residues 11-12, 36-37, 60-62, tyrosine 126, and lysine 130; these read ML, DV, and AYT. Residue tyrosine 126 is the Proton donor/acceptor of the active site.

This sequence belongs to the dTDP-4-dehydrorhamnose reductase family. Mg(2+) is required as a cofactor.

Its pathway is antibiotic biosynthesis. Functionally, involved in the biosynthesis of one of the two 2,6-deoxysugars, dTDP-L-oleandrose, attached to the macrolactone ring oleandolide to produce the aglycone antibiotic oleandomycin. Probably catalyzes the reduction of dTDP-4-keto-2,6-dideoxy-beta-L-galactose to yield dTDP-L-olivose. This Streptomyces antibioticus protein is Probable dTDP-4,6-dihydroxy-2-methyloxan-3-one 4-ketoreductase.